The chain runs to 949 residues: Protein translocase subunit SecA 1 (949 aa).

ATP is bound by residues Gln86, Gly104–Thr108, and Asp493. Residues Val869–Arg949 are disordered. The span at Ser925–Arg934 shows a compositional bias: basic and acidic residues.

Belongs to the SecA family. In terms of assembly, monomer and homodimer. Part of the essential Sec protein translocation apparatus which comprises SecA, SecYEG and auxiliary proteins SecDF. Other proteins may also be involved.

It localises to the cell membrane. Its subcellular location is the cytoplasm. The catalysed reaction is ATP + H2O + cellular proteinSide 1 = ADP + phosphate + cellular proteinSide 2.. Functionally, part of the Sec protein translocase complex. Interacts with the SecYEG preprotein conducting channel. Has a central role in coupling the hydrolysis of ATP to the transfer of proteins into and across the cell membrane, serving as an ATP-driven molecular motor driving the stepwise translocation of polypeptide chains across the membrane. This is Protein translocase subunit SecA 1 from Mycobacterium bovis (strain ATCC BAA-935 / AF2122/97).